A 352-amino-acid chain; its full sequence is UPF0324 membrane protein BCE_5279 (352 aa).

Transmembrane regions (helical) follow at residues 25-47 (FGFSQGIGITLLIAIVAKYLAEL), 52-71 (IMGQLVIAILIGMVWRAAIG), 111-130 (VLVIAAVVITFTIFVVYGLT), 140-162 (GILTACGTAICGAAAVVAIAPQV), 169-191 (TAVGAAIIAILGTIFTLIYTLLY), 201-223 (YGVFSGATLHEIAHVIAAAAPGG), 230-252 (AVIVKLTRVAMLVPVAILIGLWF), 267-289 (LPIPWFIFGFLAMSAVHSLGIIP), 291-313 (VVAGYIVVIAYMLIAMAMAGLGL), and 328-350 (FVAGLIGSVCLSVLGYVLVYALG).

The protein belongs to the UPF0324 family.

It is found in the cell membrane. The polypeptide is UPF0324 membrane protein BCE_5279 (Bacillus cereus (strain ATCC 10987 / NRS 248)).